Reading from the N-terminus, the 231-residue chain is NADH-ubiquinone oxidoreductase chain 4 (231 aa).

6 helical membrane-spanning segments follow: residues 1–21 (PIAG…YGII), 34–54 (LFLP…LTCL), 63–85 (IAYS…TPWG), 89–111 (AMAL…NTTY), 118–138 (ILIL…WWLL), and 156–176 (LLIM…LGLS).

Belongs to the complex I subunit 4 family.

It localises to the mitochondrion membrane. The enzyme catalyses a ubiquinone + NADH + 5 H(+)(in) = a ubiquinol + NAD(+) + 4 H(+)(out). Core subunit of the mitochondrial membrane respiratory chain NADH dehydrogenase (Complex I) that is believed to belong to the minimal assembly required for catalysis. Complex I functions in the transfer of electrons from NADH to the respiratory chain. The immediate electron acceptor for the enzyme is believed to be ubiquinone. This is NADH-ubiquinone oxidoreductase chain 4 (MT-ND4) from Ovophis okinavensis (Ryukyu Island pit viper).